The following is a 229-amino-acid chain: uncharacterized protein (229 aa).

This sequence to T.pallidum TP_0315, TP_0618 and TP_0619.

This is an uncharacterized protein from Treponema pallidum (strain Nichols).